A 265-amino-acid polypeptide reads, in one-letter code: Eukaryotic translation initiation factor 3 subunit J (265 aa).

Acidic residues-rich tracts occupy residues 1-12 and 26-44; these read MAPERWDDEEDS and DEEEDEVLDSWDAAEDSEV. Disordered stretches follow at residues 1 to 113 and 212 to 265; these read MAPE…DADL and TMSN…DDFM. Composition is skewed to basic and acidic residues over residues 45 to 65 and 73 to 86; these read EREKAAKAAEAKAKADAEAAA and RIQEHKEERKKKAE. Positions 61–95 form a coiled coil; sequence AEAAAKKKSKSQRIQEHKEERKKKAEEEDSDSEEE. Residues 87-97 are compositionally biased toward acidic residues; sequence EEDSDSEEEDD. A compositionally biased stretch (basic and acidic residues) spans 216 to 228; it reads EKMREERAADKGS. A compositionally biased stretch (acidic residues) spans 251–265; it reads DYDNGDDGLGDDDFM.

It belongs to the eIF-3 subunit J family. Component of the eukaryotic translation initiation factor 3 (eIF-3) complex.

The protein resides in the cytoplasm. Component of the eukaryotic translation initiation factor 3 (eIF-3) complex, which is involved in protein synthesis of a specialized repertoire of mRNAs and, together with other initiation factors, stimulates binding of mRNA and methionyl-tRNAi to the 40S ribosome. The eIF-3 complex specifically targets and initiates translation of a subset of mRNAs involved in cell proliferation. The sequence is that of Eukaryotic translation initiation factor 3 subunit J (hcr1) from Aspergillus oryzae (strain ATCC 42149 / RIB 40) (Yellow koji mold).